Reading from the N-terminus, the 217-residue chain is Small ribosomal subunit protein uS3c (217 aa).

The KH type-2 domain maps to Val46–Ala117.

The protein belongs to the universal ribosomal protein uS3 family. Part of the 30S ribosomal subunit.

The protein localises to the plastid. It is found in the chloroplast. The chain is Small ribosomal subunit protein uS3c (rps3) from Marchantia polymorpha (Common liverwort).